The following is a 453-amino-acid chain: UDP-N-acetylmuramoylalanine--D-glutamate ligase (453 aa).

120–126 (GSNGKST) lines the ATP pocket.

It belongs to the MurCDEF family.

Its subcellular location is the cytoplasm. The enzyme catalyses UDP-N-acetyl-alpha-D-muramoyl-L-alanine + D-glutamate + ATP = UDP-N-acetyl-alpha-D-muramoyl-L-alanyl-D-glutamate + ADP + phosphate + H(+). It participates in cell wall biogenesis; peptidoglycan biosynthesis. In terms of biological role, cell wall formation. Catalyzes the addition of glutamate to the nucleotide precursor UDP-N-acetylmuramoyl-L-alanine (UMA). The chain is UDP-N-acetylmuramoylalanine--D-glutamate ligase from Nitrosococcus oceani (strain ATCC 19707 / BCRC 17464 / JCM 30415 / NCIMB 11848 / C-107).